The sequence spans 273 residues: Peptidyl-prolyl cis-trans isomerase E (273 aa).

An RRM domain is found at 1–48 (MPMDYQTEKHRGFAFVEFEEVEDAMSAIDNMNESEIFGRTIRVNVARP). The tract at residues 77-103 (RKLDEPDIVNPSDTSENVEDLSDEEMR) is disordered. The PPIase cyclophilin-type domain occupies 115–271 (FFDIRIGNGD…EPVIISRCGE (157 aa)).

The protein belongs to the cyclophilin-type PPIase family. PPIase E subfamily.

Its subcellular location is the cytoplasm. The enzyme catalyses [protein]-peptidylproline (omega=180) = [protein]-peptidylproline (omega=0). Its activity is regulated as follows. Binds cyclosporin A (CsA). CsA mediates some of its effects via an inhibitory action on PPIase. PPIases accelerate the folding of proteins. It catalyzes the cis-trans isomerization of proline imidic peptide bonds in oligopeptides. This chain is Peptidyl-prolyl cis-trans isomerase E, found in Schistosoma mansoni (Blood fluke).